Here is a 348-residue protein sequence, read N- to C-terminus: F-box protein At2g20380 (348 aa).

In terms of domain architecture, F-box spans 14 to 60 (SPESNSLPNDLIVTILARLSQSYYPKLSLVSKTFRAILASPELYQTR).

The chain is F-box protein At2g20380 from Arabidopsis thaliana (Mouse-ear cress).